Consider the following 2124-residue polypeptide: MGANNSKESVSSNGNEGTIVNNFYSNQYYASIDASAQGVGTSTTPENGNVSGFLGLAGSAFNALSLLASPRTETGMMMEDRVLSRTAGNTSVNSQAAEGVLQAYGTETDSNSPTSCGDDPSKGTHATDRAFVIQLLPWKQTTNSYFAQWVRLTQKLSNNLHGNVMAKNIKSHAFAKMGFEVMLQANTSPFHNGILGLFLVPEFVRKGEITDEWIDLTPTSSLVSNTELYNPQTYANFPFDAKHSFDYSDITPEQFMIFPHQLINPKDTNVATVRVPYINIAPTNDTTVHTVWTAVVMVLVPLNFSSGASPTVSLTLTITPINSVFNGLHHTAQGPIPVRPFHNFQQFSTTVPLRTEPCYGMTVTPPVDYMPLPITDLVELAKVPSFVTVANSDTTSERSFPYFSVSNTEQGRNLFKSSVVLSDLHYQHTLVANLARYFCNYRGSLQFDFIAATTAMTRGKLLISYTPPGAGEPQSIDQAMMGTYAIWDLGLQSTFNFVVPFISASDFRFNTSSVSNALNSDGWITVWLMNPLTYPPSTPPTQQILMLMSAGSDFSYRLPISPGFAEGETSEHPMDNAECGKIDDKDAGMFSGHSVGLPTPHTSTSFFYDRYRFVGIVKSVVNNTPKPVNIYDDTGKVKNLQQVFPTSDTLLPHSLMSLSPCASVCGQPISSFLFAQRANPKKTLKLRSGDEFLYRCCPFSYIKCDLEFTVVPPANSTRDYIVHWYPPGATLDAGEVAVGNTSGSNGFDDNGMNAGSSLFSYNPTFHARAPSKVSAVIPFCLPVSLLPLYFDGFPDYSTTKGMYGCSPSFSFGTIYIESGLQETYSVYIRYKDFKGYAPRPLIRTPHIRLSERARYIMADSVLPRPLTRAERDVARDLLLIAGDIESNPGPAFNPEYTAHGPVTELIQLARKPETVDNVNRLLTTLNTLMAKWNNLKDTVTDAVFLRDMVCLLVKLTSLMYLVHGQGPGAYFAAASILLADGITFFDWYEKIKIFMARKLRVSPPFFPAAQGPDLRDFVTFFNAARGAQWMIDSLKSLITCIKQWLELEEENEAVQLEKMLIDSPRHCKAINDYNRGDSFQRPTNSFEFMDRLVECATKLGKVQIATYFRNFTTADSDTSRPEPVVVVLRGKPGVGKSAAATVMAAAVSKLLVGSQSVYTLSPDTEHMDGYHGQFVTLMDDLGQNPDGEDFRCFCQMVSCAQYRPAMADLKDKGILFTSRLLIATTNLPDFNPVTISDPRALDRRITFDILVTPGSAATKNGKLDLAAALKPDGPGEHPYTSDCPILHTTGLLLKNLRNNQTMNLKDLVDMIVKRIKHKKEVGNMLDSLVAQGPTMIVGYTKDDDGIAIVDCLEEWNKIKDKKKKQLALEMVAQELKDKHEEHKGTIKLLKMFVTGLGVVAAVAGAYATMKYFTKDKPKEEEEEPEEKKEKKTEESKEAAGPYNGPTKKEIKTLKLKAQSPLMDMEKKIAQNVMPFQIFYNGKRYTQSCLAIGKRVILVNKHAFESVEHKFVVDQKEYTLDQVTAISLDCGSGVTDVCAVCLPPGPDFKSIKKHFLPFNTTMFPGTRLTILSNDHYPMSREGSFLRFEDEVPTNVGNMPFVMLYKSTSYFGMCGSVVCSRFVDGGGIIGMHCAGGGGVSVGTRLTARMIESVFDYFYPPVAQGIIENTETGPRVHVPRTSKLKRTNATYPATEKYGPAALSRYDPRLNEGVNLDEVIFSKHTQNTLVEKGSTFRSALDMAAEIYGEKFRGNDFSPLSVEDAILGIPGLDRLDPNTASGLPYTKTRRQMIDFNTGQILDDTLKCRLGQWLAGRPPQEVHYQTFLKDEIRPIEKVKAGKTRIIDVPPLDHVIAFRMLFGRFIAHYHLNFGFKTGSAIGCDPDVAWASFGFELSGFPYLYDFDYSNFDASHSTSIFEILEQKFFSPELGFDPRCSLLLKSLAVSTHCYENKRLQIAGGLPSGTAGTSVLNTVINNIIFHGALYHTYTNFERDDISMLAYGDDIVVASKFELDLVMVKAFMNRIGYKITPADKSDEFRPKCMDDICFLKRRFVKVAGVWAPVMETENLEAMLSWYKPGTLNEKLQSVSRLAHFSGRDVYDHLFKPFIRDGFDVTPWKQLHLEWLNKLSA.

A lipid anchor (N-myristoyl glycine; by host) is attached at Gly-2. A host EIF4E binding region spans residues 873-880; it reads VARDLLLI. An SF3 helicase domain is found at 1102–1264; the sequence is VQIATYFRNF…SAATKNGKLD (163 aa). 1130–1137 provides a ligand contact to ATP; sequence GKPGVGKS. Residues 1415–1437 are compositionally biased toward basic and acidic residues; sequence DKPKEEEEEPEEKKEKKTEESKE. A disordered region spans residues 1415-1446; sequence DKPKEEEEEPEEKKEKKTEESKEAAGPYNGPT. Position 1442 is an O-(5'-phospho-RNA)-tyrosine (Tyr-1442). In terms of domain architecture, Peptidase C3 spans 1459–1648; it reads SPLMDMEKKI…VGTRLTARMI (190 aa). Residues His-1501, Asp-1535, and Cys-1612 each act as for protease 3C activity in the active site. Residues 1893-2011 enclose the RdRp catalytic domain; the sequence is PYLYDFDYSN…ASKFELDLVM (119 aa). Catalysis depends on for RdRp activity residues Asp-1899 and Asp-1997.

Belongs to the picornaviruses polyprotein family. As to quaternary structure, interacts with host EIF4E. Interacts with host IFIH1/MDA5; this interaction inhibits the induction of the IFN-beta signal pathway. Specific enzymatic cleavages by the viral protease in vivo yield a variety of precursors and mature proteins. The polyprotein seems to be cotranslationally cleaved at the 2A/2B junction by a ribosomal skip from one codon to the next without formation of a peptide bond. This process would release the P1-2A peptide from the translational complex. Post-translationally, during virion maturation, immature virions are rendered infectious following cleavage of VP0 into VP4 and VP2. This maturation seems to be an autocatalytic event triggered by the presence of RNA in the capsid and is followed by a conformational change of the particle. In terms of processing, myristoylation is required during RNA encapsidation and formation of the mature virus particle. Uridylylated by the polymerase and is covalently linked to the 5'-end of genomic RNA. This uridylylated form acts as a nucleotide-peptide primer for the polymerase.

The protein localises to the virion. The protein resides in the host cytoplasm. It is found in the host nucleus. It localises to the host nucleolus. Its subcellular location is the host cytoplasmic vesicle membrane. It catalyses the reaction RNA(n) + a ribonucleoside 5'-triphosphate = RNA(n+1) + diphosphate. It carries out the reaction ATP + H2O = ADP + phosphate + H(+). The enzyme catalyses Selective cleavage of Gln-|-Gly bond in the poliovirus polyprotein. In other picornavirus reactions Glu may be substituted for Gln, and Ser or Thr for Gly.. Its function is as follows. Forms an icosahedral capsid of pseudo T=3 symmetry with capsid proteins VP2 and VP3. Together they form an icosahedral capsid composed of 60 copies of each VP1, VP2, and VP3, with a diameter of approximately 300 Angstroms. VP4 lies on the inner surface of the protein shell formed by VP1, VP2 and VP3. All the three latter proteins contain a beta-sheet structure called beta-barrel jelly roll. VP1 is situated at the 12 fivefold axes, whereas VP2 and VP3 are located at the quasi-sixfold axes. In terms of biological role, lies on the inner surface of the capsid shell. After binding to the host receptor, the capsid undergoes conformational changes. Capsid protein VP4 is released, capsid protein VP1 N-terminus is externalized, and together, they shape a pore in the host membrane through which the viral genome is translocated into the host cell cytoplasm. After genome has been released, the channel shrinks. Functionally, VP0 precursor is a component of immature procapsids. Involved in host translation shutoff by inhibiting cap-dependent mRNA translation. Nuclear localization is required for this function. The resulting inhibition of cellular protein synthesis serves to ensure maximal viral gene expression and to evade host immune response. Its function is as follows. Affects membrane integrity and causes an increase in membrane permeability. In terms of biological role, associates with and induces structural rearrangements of intracellular membranes. It displays RNA-binding, nucleotide binding and NTPase activities. Interacts with IFIH1/MDA5 to inhibit the induction of the IFN-beta signal pathway. Functionally, serves as membrane anchor via its hydrophobic domain. Forms a primer, VPg-pU, which is utilized by the polymerase for the initiation of RNA chains. Its function is as follows. Cysteine protease that generates mature viral proteins from the precursor polyprotein. In addition to its proteolytic activity, it binds to viral RNA, and thus influences viral genome replication. RNA and substrate cooperatively bind to the protease. Cleaves host PABP1, this cleavage is important for viral replication. Cleaves host TANK and disrupts the TANK-TBK1-IKKepsilon-IRF3 complex, thereby inhibiting the induction of the IFN-beta signal pathway. In terms of biological role, replicates the genomic and antigenomic RNAs by recognizing replications specific signals. Performs VPg uridylylation. The protein is Genome polyprotein of Cosavirus A (isolate Human/Pakistan/0553/-) (HCoSV-A).